The chain runs to 158 residues: 6,7-dimethyl-8-ribityllumazine synthase 2 (158 aa).

Residues tryptophan 20, 54 to 56 (AYE), and 78 to 80 (FVI) each bind 5-amino-6-(D-ribitylamino)uracil. The Proton donor role is filled by arginine 86. Serine 111 contributes to the 5-amino-6-(D-ribitylamino)uracil binding site. Histidine 125 provides a ligand contact to (2S)-2-hydroxy-3-oxobutyl phosphate.

Belongs to the DMRL synthase family. In terms of assembly, homodecamer, arranged as a dimer of pentamers.

Its subcellular location is the cytoplasm. It carries out the reaction (2S)-2-hydroxy-3-oxobutyl phosphate + 5-amino-6-(D-ribitylamino)uracil = 6,7-dimethyl-8-(1-D-ribityl)lumazine + phosphate + 2 H2O + H(+). It functions in the pathway cofactor biosynthesis; riboflavin biosynthesis; riboflavin from 2-hydroxy-3-oxobutyl phosphate and 5-amino-6-(D-ribitylamino)uracil: step 1/2. Functionally, catalyzes the formation of 6,7-dimethyl-8-ribityllumazine by condensation of 5-amino-6-(D-ribitylamino)uracil with 3,4-dihydroxy-2-butanone 4-phosphate. This is the penultimate step in the biosynthesis of riboflavin. The isozyme RibH2 but not RibH1 is essential for Brucella intracellular survival and replication inside macrophages or in mice. Displays low catalytic activity in comparison with the isozyme RibH1. Is a highly immunogenic protein. Activates dendritic cells (DCs) in vitro, increasing the levels of costimulatory molecules and the secretion of pro-inflammatory cytokines, and recruits DCs, B cells and CD8+ T cells in vivo, both effects in a TLR4-dependent manner. Induces the cross presentation of covalently attached peptides and generates a strong and long-lasting humoral immune response without adjuvants; TLR4 signaling is necessary for the induction of the cytotoxic response but not for antigen cross presentation. Elicits a TLR4-mediated protective response against B16 melanoma in mice, slowing tumor growth and prolonging mice survival. The chain is 6,7-dimethyl-8-ribityllumazine synthase 2 from Brucella abortus (strain 2308).